A 336-amino-acid chain; its full sequence is MTRAAVLGAGSWGTAFAKVLADAGTEVTIWARRPEIAEALATEHRNPAYLPDVQLPAVSATHDAEAALDGAQLVVLAVPSQSLRANLTGWRPALRAAIDEHDATLLSLAKGIETGTLLRMSQVIAEVTGAEERRIAVLSGPNLAREIAAGQPAATVIACSDAARAEAVQQASYTGYFRPYTNTDVIGCEIGGACKNVIALACGIAAGMGLGDNSIASLITRGLAEIMRLAVTLGAEPVTLAGLAGVGDLVATCTSPLSRNRSFGHVLGAGGSMEAAQQATHGQVAEGVKSCTSVRALAAAHEVEMPLTDAVHRVCHEGISVREAVGSLLGRRIKPE.

The NADPH site is built by Ser11, Trp12, Arg32, Arg33, and Lys110. Residues Lys110 and Gly140 each coordinate sn-glycerol 3-phosphate. Ala144 is an NADPH binding site. Residues Lys195, Asp248, Ser258, Arg259, and Asn260 each coordinate sn-glycerol 3-phosphate. Residue Lys195 is the Proton acceptor of the active site. Arg259 lines the NADPH pocket. Residues Val284 and Glu286 each coordinate NADPH.

The protein belongs to the NAD-dependent glycerol-3-phosphate dehydrogenase family.

It localises to the cytoplasm. It catalyses the reaction sn-glycerol 3-phosphate + NAD(+) = dihydroxyacetone phosphate + NADH + H(+). The enzyme catalyses sn-glycerol 3-phosphate + NADP(+) = dihydroxyacetone phosphate + NADPH + H(+). Its pathway is membrane lipid metabolism; glycerophospholipid metabolism. Catalyzes the reduction of the glycolytic intermediate dihydroxyacetone phosphate (DHAP) to sn-glycerol 3-phosphate (G3P), the key precursor for phospholipid synthesis. In Nocardia farcinica (strain IFM 10152), this protein is Glycerol-3-phosphate dehydrogenase [NAD(P)+].